We begin with the raw amino-acid sequence, 540 residues long: Glucose-6-phosphate isomerase (540 aa).

Catalysis depends on Glu351, which acts as the Proton donor. Residues His382 and Lys506 contribute to the active site.

The protein belongs to the GPI family.

The protein resides in the cytoplasm. It carries out the reaction alpha-D-glucose 6-phosphate = beta-D-fructose 6-phosphate. The protein operates within carbohydrate biosynthesis; gluconeogenesis. Its pathway is carbohydrate degradation; glycolysis; D-glyceraldehyde 3-phosphate and glycerone phosphate from D-glucose: step 2/4. Functionally, catalyzes the reversible isomerization of glucose-6-phosphate to fructose-6-phosphate. This chain is Glucose-6-phosphate isomerase, found in Corynebacterium glutamicum (strain ATCC 13032 / DSM 20300 / JCM 1318 / BCRC 11384 / CCUG 27702 / LMG 3730 / NBRC 12168 / NCIMB 10025 / NRRL B-2784 / 534).